A 483-amino-acid polypeptide reads, in one-letter code: Galactose-3-O-sulfotransferase 4 (483 aa).

Topologically, residues 1–18 (MGVLSPTRTMRLWGPRSL) are cytoplasmic. The chain crosses the membrane as a helical; Signal-anchor for type II membrane protein span at residues 19-39 (GVALGVFMTIGFALQLLGGPF). The Lumenal segment spans residues 40-483 (QRRLPGLQLR…PLKTSRRPSP (444 aa)). The disordered stretch occupies residues 225 to 248 (KRGNPHVSRDPNPPQLPSGAGPPA). Asn371 carries N-linked (GlcNAc...) asparagine glycosylation.

The protein belongs to the galactose-3-O-sulfotransferase family. It depends on Mn(2+) as a cofactor.

The protein resides in the golgi apparatus. The protein localises to the golgi stack membrane. It functions in the pathway protein modification; carbohydrate sulfation. Functionally, catalyzes the transfer of sulfate to beta-1,3-linked galactose residues in O-linked glycoproteins. Good substrates include asialofetuin, Gal-beta-1,3-GalNAc and Gal-beta-1,3 (GlcNAc-beta-1,6)GalNAc. The sequence is that of Galactose-3-O-sulfotransferase 4 (GAL3ST4) from Bos taurus (Bovine).